A 333-amino-acid chain; its full sequence is Cytochrome f (333 aa).

The first 37 residues, 1–37, serve as a signal peptide directing secretion; the sequence is MRNSCKKARRTRPLKATIQALLVAIATMTFFFTSDIA. Over 38–298 the chain is Cytoplasmic; that stretch reads LPQSAAAYPF…TEIVLQDPNR (261 aa). Positions 45, 66, 69, and 70 each coordinate heme. Residues 299-319 traverse the membrane as a helical segment; the sequence is VKWMIAFICLVMLAQLMLILK. Over 320–333 the chain is Lumenal, thylakoid; it reads KKQVEKVQAAEMNF.

The protein belongs to the cytochrome f family. As to quaternary structure, the 4 large subunits of the cytochrome b6-f complex are cytochrome b6, subunit IV (17 kDa polypeptide, PetD), cytochrome f and the Rieske protein, while the 4 small subunits are PetG, PetL, PetM and PetN. The complex functions as a dimer. Requires heme as cofactor.

The protein resides in the cellular thylakoid membrane. Its function is as follows. Component of the cytochrome b6-f complex, which mediates electron transfer between photosystem II (PSII) and photosystem I (PSI), cyclic electron flow around PSI, and state transitions. This is Cytochrome f (petA) from Mastigocladus laminosus (Fischerella sp.).